The following is a 628-amino-acid chain: DNA-directed RNA polymerase subunit gamma (628 aa).

Positions 71, 73, 86, and 89 each coordinate Zn(2+). Mg(2+) is bound by residues aspartate 467, aspartate 469, and aspartate 471.

This sequence belongs to the RNA polymerase beta' chain family. RpoC1 subfamily. As to quaternary structure, in cyanobacteria the RNAP catalytic core is composed of 2 alpha, 1 beta, 1 beta', 1 gamma and 1 omega subunit. When a sigma factor is associated with the core the holoenzyme is formed, which can initiate transcription. Mg(2+) serves as cofactor. It depends on Zn(2+) as a cofactor.

The catalysed reaction is RNA(n) + a ribonucleoside 5'-triphosphate = RNA(n+1) + diphosphate. In terms of biological role, DNA-dependent RNA polymerase catalyzes the transcription of DNA into RNA using the four ribonucleoside triphosphates as substrates. In Crocosphaera subtropica (strain ATCC 51142 / BH68) (Cyanothece sp. (strain ATCC 51142)), this protein is DNA-directed RNA polymerase subunit gamma.